Reading from the N-terminus, the 1479-residue chain is Type VII secretion system protein EssC (1479 aa).

Over 1 to 229 the chain is Cytoplasmic; it reads MHKLIIKYNK…RPPQPIQKNN (229 aa). A helical membrane pass occupies residues 230–252; it reads TVIWRSIIPPLVMIALTVVIFLV. Residues 253 to 256 lie on the Extracellular side of the membrane; sequence RPIG. Residues 257-279 traverse the membrane as a helical segment; that stretch reads IYILMMIGMSSVTIVFGITTYFS. Residues 280 to 1479 lie on the Cytoplasmic side of the membrane; sequence EKKKYNKDVE…QAYQKIRWFK (1200 aa). FtsK domains lie at 652 to 846 and 997 to 1183; these read DDIL…QDSN and QGPM…SEVS. ATP-binding positions include 672-679 and 1014-1021; these read GTTGSGKS and GSPGYGRT.

It belongs to the EssC family. Homooligomer. Interacts with EsaE.

It is found in the cell membrane. Functionally, component of the type VII secretion system (Ess). Required for the secretion of substrates including EsxA and EsxB. However, unable to support secretion of the substrate protein EsxC. The chain is Type VII secretion system protein EssC from Staphylococcus aureus (strain MSSA476).